A 109-amino-acid polypeptide reads, in one-letter code: Aquaporin-2 (109 aa).

Over 1–6 (SIAFSR) the chain is Cytoplasmic. The helical transmembrane segment at 7–27 (AVFSEFLATLLFVFFGLGSAL) threads the bilayer. At 28–35 (NWPQALPS) the chain is on the extracellular side. The chain crosses the membrane as a helical span at residues 36–54 (VLQIAMAFGLAIGTLVQTL). Over 55 to 59 (GHISG) the chain is Cytoplasmic. The segment at residues 60–69 (AHINPAVTVA) is an intramembrane region (discontinuously helical). The short motif at 63 to 65 (NPA) is the NPA 1 element. The Cytoplasmic portion of the chain corresponds to 70–80 (CLVGCHVSFLR). The chain crosses the membrane as a helical span at residues 81 to 102 (ATFYVAAQLLGAVAGAALLHEL). Over 103 to 109 (TPPDIRG) the chain is Extracellular.

This sequence belongs to the MIP/aquaporin (TC 1.A.8) family. As to quaternary structure, homotetramer. Serine phosphorylation is necessary and sufficient for expression at the apical membrane. Endocytosis is not phosphorylation-dependent. In terms of processing, N-glycosylated.

It is found in the apical cell membrane. The protein localises to the basolateral cell membrane. It localises to the cell membrane. Its subcellular location is the cytoplasmic vesicle membrane. The protein resides in the golgi apparatus. It is found in the trans-Golgi network membrane. It carries out the reaction H2O(in) = H2O(out). It catalyses the reaction glycerol(in) = glycerol(out). Its function is as follows. Forms a water-specific channel that provides the plasma membranes of renal collecting duct with high permeability to water, thereby permitting water to move in the direction of an osmotic gradient. Plays an essential role in renal water homeostasis. Could also be permeable to glycerol. In Amblysomus hottentotus (Hottentot golden mole), this protein is Aquaporin-2.